A 328-amino-acid chain; its full sequence is Malate dehydrogenase (328 aa).

12–18 (GAAGQIG) is a binding site for NAD(+). Substrate contacts are provided by arginine 92 and arginine 98. Residues asparagine 105, glutamine 112, and 129 to 131 (TGN) contribute to the NAD(+) site. Residues asparagine 131 and arginine 162 each coordinate substrate. The Proton acceptor role is filled by histidine 187.

This sequence belongs to the LDH/MDH superfamily. MDH type 2 family.

The catalysed reaction is (S)-malate + NAD(+) = oxaloacetate + NADH + H(+). Catalyzes the reversible oxidation of malate to oxaloacetate. This Nocardioides sp. (strain ATCC BAA-499 / JS614) protein is Malate dehydrogenase.